We begin with the raw amino-acid sequence, 646 residues long: Galactofuranosyltransferase GlfT2 (646 aa).

Positions 182, 211, 240, and 267 each coordinate UDP-alpha-D-galactofuranose. Asp-267 and Asp-269 together coordinate Mn(2+). Residue Asp-384 is the Proton acceptor of the active site. Mn(2+) is bound at residue His-408.

It belongs to the glycosyltransferase 2 family. In terms of assembly, homotetramer. The cofactor is Mn(2+). Requires Mg(2+) as cofactor.

The protein resides in the cell membrane. The enzyme catalyses beta-D-galactofuranosyl-(1-&gt;5)-beta-D-galactofuranosyl-(1-&gt;4)-alpha-L-rhamnosyl-(1-&gt;3)-N-acetyl-alpha-D-glucosaminyl-diphospho-trans,octa-cis-decaprenol + 28 UDP-alpha-D-galactofuranose = [beta-D-galactofuranosyl-(1-&gt;5)-beta-D-galactofuranosyl-(1-&gt;6)]14-beta-D-galactofuranosyl-(1-&gt;5)-beta-D-galactofuranosyl-(1-&gt;4)-alpha-L-rhamnopyranosyl-(1-&gt;3)-N-acetyl-alpha-D-glucosaminyl-diphospho-trans,octa-cis-decaprenol + 28 UDP + 28 H(+). The protein operates within cell wall biogenesis; cell wall polysaccharide biosynthesis. Its function is as follows. Involved in the galactan polymerization of the arabinogalactan (AG) region of the mycolylarabinogalactan-peptidoglycan (mAGP) complex, an essential component of the mycobacteria cell wall. Thus, successively transfers approximately 28 galactofuranosyl (Galf) residues from UDP-galactofuranose (UDP-Galf) onto the galactofuranosyl-galactofuranosyl-rhamnosyl-GlcNAc-diphospho-decaprenol (Galf-Galf-Rha-GlcNAc-PP-C50) acceptor produced by GlfT1, with alternating 1-&gt;5 and 1-&gt;6 links, forming a galactan domain with approximately 30 galactofuranosyl residues. In Mycolicibacterium smegmatis (strain ATCC 700084 / mc(2)155) (Mycobacterium smegmatis), this protein is Galactofuranosyltransferase GlfT2.